Consider the following 139-residue polypeptide: Putative pre-16S rRNA nuclease (139 aa).

The protein belongs to the YqgF nuclease family.

The protein resides in the cytoplasm. In terms of biological role, could be a nuclease involved in processing of the 5'-end of pre-16S rRNA. In Streptococcus pyogenes serotype M1, this protein is Putative pre-16S rRNA nuclease.